The primary structure comprises 675 residues: UvrABC system protein B (675 aa).

The region spanning 35–422 (EGVSDGLMFQ…ADNVVEQVVR (388 aa)) is the Helicase ATP-binding domain. ATP is bound at residue 48–55 (GVTGSGKT). Residues 101–124 (YYDYYQPEAYVPTRDLFIEKDSSI) carry the Beta-hairpin motif. One can recognise a Helicase C-terminal domain in the interval 439 to 605 (QVDDLLGEIH…GVSKAVRELI (167 aa)). One can recognise a UVR domain in the interval 633–668 (AREIRRLEKLMMDHARNLEFEQAAAARDALNALKSR).

Belongs to the UvrB family. Forms a heterotetramer with UvrA during the search for lesions. Interacts with UvrC in an incision complex.

It localises to the cytoplasm. Functionally, the UvrABC repair system catalyzes the recognition and processing of DNA lesions. A damage recognition complex composed of 2 UvrA and 2 UvrB subunits scans DNA for abnormalities. Upon binding of the UvrA(2)B(2) complex to a putative damaged site, the DNA wraps around one UvrB monomer. DNA wrap is dependent on ATP binding by UvrB and probably causes local melting of the DNA helix, facilitating insertion of UvrB beta-hairpin between the DNA strands. Then UvrB probes one DNA strand for the presence of a lesion. If a lesion is found the UvrA subunits dissociate and the UvrB-DNA preincision complex is formed. This complex is subsequently bound by UvrC and the second UvrB is released. If no lesion is found, the DNA wraps around the other UvrB subunit that will check the other stand for damage. The polypeptide is UvrABC system protein B (Bordetella bronchiseptica (strain ATCC BAA-588 / NCTC 13252 / RB50) (Alcaligenes bronchisepticus)).